The primary structure comprises 862 residues: Ecdysone-induced protein 78C (862 aa).

4 disordered regions span residues serine 28 to leucine 83, leucine 97 to histidine 138, alanine 173 to threonine 210, and alanine 230 to asparagine 353. A compositionally biased stretch (basic and acidic residues) spans lysine 37 to threonine 46. The segment covering arginine 47–alanine 82 has biased composition (acidic residues). Polar residues predominate over residues aspartate 105–glutamate 119. Low complexity-rich tracts occupy residues alanine 173–glutamine 206, alanine 230–valine 291, glutamine 308–glutamine 335, and serine 342–asparagine 353. A DNA-binding region (nuclear receptor) is located at residues phenylalanine 360–tyrosine 435. 2 consecutive NR C4-type zinc fingers follow at residues cysteine 363–cysteine 383 and cysteine 399–cysteine 418. The segment at glutamate 444–serine 557 is disordered. Low complexity predominate over residues glycine 447–serine 460. Polar residues predominate over residues valine 463–histidine 472. Over residues histidine 475 to histidine 508 the composition is skewed to low complexity. Polar residues predominate over residues threonine 516 to serine 533. Residues asparagine 539–asparagine 555 are compositionally biased toward low complexity. The NR LBD domain maps to tyrosine 626 to isoleucine 855.

The protein belongs to the nuclear hormone receptor family. NR1 subfamily.

It is found in the nucleus. Its function is as follows. Induces the early late puff 78C which triggers puparium formation and development. This is Ecdysone-induced protein 78C (Eip78C) from Drosophila melanogaster (Fruit fly).